Reading from the N-terminus, the 469-residue chain is 3-isopropylmalate dehydratase large subunit 2 (469 aa).

[4Fe-4S] cluster is bound by residues C347, C408, and C411.

It belongs to the aconitase/IPM isomerase family. LeuC type 1 subfamily. Heterodimer of LeuC and LeuD. [4Fe-4S] cluster is required as a cofactor.

The catalysed reaction is (2R,3S)-3-isopropylmalate = (2S)-2-isopropylmalate. The protein operates within amino-acid biosynthesis; L-leucine biosynthesis; L-leucine from 3-methyl-2-oxobutanoate: step 2/4. In terms of biological role, catalyzes the isomerization between 2-isopropylmalate and 3-isopropylmalate, via the formation of 2-isopropylmaleate. This chain is 3-isopropylmalate dehydratase large subunit 2, found in Mannheimia succiniciproducens (strain KCTC 0769BP / MBEL55E).